The following is a 309-amino-acid chain: Protein-L-isoaspartate O-methyltransferase 2 (309 aa).

A Nuclear localization signal motif is present at residues 23–28 (KKRKKK). The active site involves Ser144.

It belongs to the methyltransferase superfamily. L-isoaspartyl/D-aspartyl protein methyltransferase family. In terms of tissue distribution, expressed in rosette leaves, stems, cauline leaves, flowers and developing seeds.

It localises to the nucleus. The enzyme catalyses [protein]-L-isoaspartate + S-adenosyl-L-methionine = [protein]-L-isoaspartate alpha-methyl ester + S-adenosyl-L-homocysteine. Its function is as follows. Catalyzes the methyl esterification of L-isoaspartyl residues in peptides and proteins that result from spontaneous decomposition of normal L-aspartyl and L-asparaginyl residues. It plays a role in the repair and/or degradation of damaged proteins. The sequence is that of Protein-L-isoaspartate O-methyltransferase 2 (PIMT2) from Arabidopsis thaliana (Mouse-ear cress).